We begin with the raw amino-acid sequence, 303 residues long: tRNA dimethylallyltransferase (303 aa).

ATP is bound at residue 13 to 20 (GPTASGKS). A substrate-binding site is contributed by 15-20 (TASGKS). Interaction with substrate tRNA stretches follow at residues 38–41 (DSMQ) and 162–166 (QRLLR).

It belongs to the IPP transferase family. In terms of assembly, monomer. Mg(2+) serves as cofactor.

The enzyme catalyses adenosine(37) in tRNA + dimethylallyl diphosphate = N(6)-dimethylallyladenosine(37) in tRNA + diphosphate. Catalyzes the transfer of a dimethylallyl group onto the adenine at position 37 in tRNAs that read codons beginning with uridine, leading to the formation of N6-(dimethylallyl)adenosine (i(6)A). The protein is tRNA dimethylallyltransferase of Methylocella silvestris (strain DSM 15510 / CIP 108128 / LMG 27833 / NCIMB 13906 / BL2).